Reading from the N-terminus, the 255-residue chain is Imidazole glycerol phosphate synthase subunit HisF (255 aa).

Residues D12 and D131 contribute to the active site.

This sequence belongs to the HisA/HisF family. In terms of assembly, heterodimer of HisH and HisF.

The protein resides in the cytoplasm. The catalysed reaction is 5-[(5-phospho-1-deoxy-D-ribulos-1-ylimino)methylamino]-1-(5-phospho-beta-D-ribosyl)imidazole-4-carboxamide + L-glutamine = D-erythro-1-(imidazol-4-yl)glycerol 3-phosphate + 5-amino-1-(5-phospho-beta-D-ribosyl)imidazole-4-carboxamide + L-glutamate + H(+). It functions in the pathway amino-acid biosynthesis; L-histidine biosynthesis; L-histidine from 5-phospho-alpha-D-ribose 1-diphosphate: step 5/9. Functionally, IGPS catalyzes the conversion of PRFAR and glutamine to IGP, AICAR and glutamate. The HisF subunit catalyzes the cyclization activity that produces IGP and AICAR from PRFAR using the ammonia provided by the HisH subunit. The sequence is that of Imidazole glycerol phosphate synthase subunit HisF from Neisseria gonorrhoeae (strain ATCC 700825 / FA 1090).